The following is a 360-amino-acid chain: ELAV-like protein 2 (360 aa).

The disordered stretch occupies residues 1–36 (METQLSNGPTCNNTANGPTTVNNNCSSPVDSGNTED). 2 RRM domains span residues 39-117 (TNLI…YARP) and 125-205 (ANLY…FANN). A Phosphoserine modification is found at Ser-221. The region spanning 277–355 (WCIFVYNLAP…RVLQVSFKTN (79 aa)) is the RRM 3 domain.

This sequence belongs to the RRM elav family. Interacts with IGF2BP1. Interacts with MAP1B light chain LC1. Brain; neural-specific. Expressed in the hippocampus.

RNA-binding protein that binds to the 3' untranslated region (3'UTR) of target mRNAs. Seems to recognize a GAAA motif. Can bind to its own 3'UTR, the FOS 3'UTR and the ID 3'UTR. This is ELAV-like protein 2 (Elavl2) from Mus musculus (Mouse).